The following is a 586-amino-acid chain: Envelope glycoprotein (586 aa).

Residues methionine 1–alanine 22 form the signal peptide. The Extracellular portion of the chain corresponds to glycine 23 to valine 526. Asparagine 120 and asparagine 237 each carry an N-linked (GlcNAc...) asparagine; by host glycan. Residues cysteine 247–cysteine 250 carry the CXXC motif. 3 disulfide bridges follow: cysteine 247/cysteine 250, cysteine 247/cysteine 483, and cysteine 475/cysteine 482. N-linked (GlcNAc...) asparagine; by host glycosylation is found at asparagine 264, asparagine 276, asparagine 291, asparagine 304, asparagine 318, asparagine 324, asparagine 339, and asparagine 357. Positions leucine 398–leucine 418 are fusion peptide. Coiled-coil stretches lie at residues glycine 419–alanine 469 and glutamine 479–phenylalanine 515. Positions leucine 458–isoleucine 474 are immunosuppression. Residues cysteine 475–cysteine 483 carry the CX6CC motif. N-linked (GlcNAc...) asparagine; by host glycosylation is present at asparagine 487. A helical membrane pass occupies residues methionine 527–phenylalanine 547. At asparagine 548–threonine 586 the chain is on the cytoplasmic side. The YXXL motif; contains endocytosis signal motif lies at tyrosine 570–leucine 573.

The mature envelope protein (Env) consists of a trimer of SU-TM heterodimers attached by a labile interchain disulfide bond. Post-translationally, specific enzymatic cleavages in vivo yield mature proteins. Envelope glycoproteins are synthesized as an inactive precursor that is N-glycosylated and processed likely by host cell furin or by a furin-like protease in the Golgi to yield the mature SU and TM proteins. The cleavage site between SU and TM requires the minimal sequence [KR]-X-[KR]-R. The R-peptide is released from the C-terminus of the cytoplasmic tail of the TM protein upon particle formation as a result of proteolytic cleavage by the viral protease. Cleavage of this peptide is required for TM to become fusogenic. In terms of processing, the CXXC motif is highly conserved across a broad range of retroviral envelope proteins. It is thought to participate in the formation of a labile disulfide bond possibly with the CX6CC motif present in the transmembrane protein. Isomerization of the intersubunit disulfide bond to an SU intrachain disulfide bond is thought to occur upon receptor recognition in order to allow membrane fusion.

It localises to the virion membrane. Its subcellular location is the host cell membrane. Functionally, the surface protein (SU) attaches the virus to the host cell by binding to its receptor. This interaction triggers the refolding of the transmembrane protein (TM) and is thought to activate its fusogenic potential by unmasking its fusion peptide. Fusion occurs at the host cell plasma membrane. Its function is as follows. The transmembrane protein (TM) acts as a class I viral fusion protein. Under the current model, the protein has at least 3 conformational states: pre-fusion native state, pre-hairpin intermediate state, and post-fusion hairpin state. During viral and target cell membrane fusion, the coiled coil regions (heptad repeats) assume a trimer-of-hairpins structure, positioning the fusion peptide in close proximity to the C-terminal region of the ectodomain. The formation of this structure appears to drive apposition and subsequent fusion of viral and target cell membranes. Membranes fusion leads to delivery of the nucleocapsid into the cytoplasm. This is Envelope glycoprotein (env) from Mason-Pfizer monkey virus (MPMV).